We begin with the raw amino-acid sequence, 123 residues long: Large ribosomal subunit protein uL22c (123 aa).

This sequence belongs to the universal ribosomal protein uL22 family. As to quaternary structure, part of the 50S ribosomal subunit.

Its subcellular location is the plastid. The protein localises to the chloroplast. Its function is as follows. This protein binds specifically to 23S rRNA. The globular domain of the protein is located near the polypeptide exit tunnel on the outside of the subunit, while an extended beta-hairpin is found that lines the wall of the exit tunnel in the center of the 70S ribosome. The polypeptide is Large ribosomal subunit protein uL22c (rpl22) (Chara vulgaris (Common stonewort)).